The following is a 671-amino-acid chain: DNA ligase (671 aa).

Residues 32-36, 81-82, and glutamate 113 each bind NAD(+); these read DAEYD and SL. Catalysis depends on lysine 115, which acts as the N6-AMP-lysine intermediate. NAD(+)-binding residues include arginine 136, glutamate 173, lysine 290, and lysine 314. Zn(2+) is bound by residues cysteine 408, cysteine 411, cysteine 426, and cysteine 432. In terms of domain architecture, BRCT spans 593–671; the sequence is EIDSPFAGKT…EAEMLRLLGS (79 aa).

The protein belongs to the NAD-dependent DNA ligase family. LigA subfamily. It depends on Mg(2+) as a cofactor. Mn(2+) is required as a cofactor.

The catalysed reaction is NAD(+) + (deoxyribonucleotide)n-3'-hydroxyl + 5'-phospho-(deoxyribonucleotide)m = (deoxyribonucleotide)n+m + AMP + beta-nicotinamide D-nucleotide.. DNA ligase that catalyzes the formation of phosphodiester linkages between 5'-phosphoryl and 3'-hydroxyl groups in double-stranded DNA using NAD as a coenzyme and as the energy source for the reaction. It is essential for DNA replication and repair of damaged DNA. In Escherichia coli (strain SE11), this protein is DNA ligase.